An 805-amino-acid chain; its full sequence is Mitochondrial inner membrane m-AAA protease component AFG3L2 (805 aa).

A mitochondrion-targeting transit peptide spans 1–39; it reads MAHRCLLLWGRGACRPRGMPPMLLPGGRTGSTERLYLRM. Positions 40–67 are cleaved as a propeptide — removed in mature form; sequence LYRYATTQAKTSRNSLLTDVIAAYQRLC. A disordered region spans residues 74–127; that stretch reads FEKYFPNGKNGKKTSEPKEVMGEKKEPKPAAAPRPSGGGVGGGGKRGGKKDDSH. Basic and acidic residues predominate over residues 86–101; sequence KTSEPKEVMGEKKEPK. A compositionally biased stretch (gly residues) spans 109-118; the sequence is SGGGVGGGGK. An N6-succinyllysine modification is found at Lys118. The next 2 helical transmembrane spans lie at 144–164 and 252–272; these read FKMY…YFLF and GSFL…LYTI. Positions 311, 312, 353, 354, 355, 356, 357, and 491 each coordinate ATP. His575 provides a ligand contact to Zn(2+). Glu576 is a catalytic residue. Positions 579 and 650 each coordinate Zn(2+). Residues 760 to 805 form a disordered region; that stretch reads FVEGTGSLDEDTSLPEGLKDWNREREGSEEPSGEKVTSPVQGAGPA. The span at 776 to 787 shows a compositional bias: basic and acidic residues; that stretch reads GLKDWNREREGS.

This sequence in the N-terminal section; belongs to the AAA ATPase family. In the C-terminal section; belongs to the peptidase M41 family. In terms of assembly, homohexamer. Forms heterohexamers with SPG7. The m-AAA protease is either composed of homohexamers of AFG3L2 or heterohexamers of AFG3L2 and SPG7. Interacts with MAIP1. Interacts with DNAJC19. Interacts with PHB2. It depends on Zn(2+) as a cofactor. In terms of processing, upon import into the mitochondrion, the N-terminal transit peptide is cleaved to generate an intermediate form which undergoes autocatalytic proteolytic processing to generate the proteolytically active mature form.

The protein localises to the mitochondrion inner membrane. It carries out the reaction ATP + H2O = ADP + phosphate + H(+). In terms of biological role, catalytic component of the m-AAA protease, a protease that plays a key role in proteostasis of inner mitochondrial membrane proteins, and which is essential for axonal and neuron development. AFG3L2 possesses both ATPase and protease activities: the ATPase activity is required to unfold substrates, threading them into the internal proteolytic cavity for hydrolysis into small peptide fragments. The m-AAA protease carries out protein quality control in the inner membrane of the mitochondria by mediating degradation of mistranslated or misfolded polypeptides. The m-AAA protease complex also promotes the processing and maturation of mitochondrial proteins, such as MRPL32/bL32m, PINK1 and SP7. Mediates protein maturation of the mitochondrial ribosomal subunit MRPL32/bL32m by catalyzing the cleavage of the presequence of MRPL32/bL32m prior to assembly into the mitochondrial ribosome. Required for SPG7 maturation into its active mature form after SPG7 cleavage by mitochondrial-processing peptidase (MPP). Required for the maturation of PINK1 into its 52kDa mature form after its cleavage by mitochondrial-processing peptidase (MPP). Acts as a regulator of calcium in neurons by mediating degradation of SMDT1/EMRE before its assembly with the uniporter complex, limiting the availability of SMDT1/EMRE for MCU assembly and promoting efficient assembly of gatekeeper subunits with MCU. Promotes the proteolytic degradation of GHITM upon hyperpolarization of mitochondria: progressive GHITM degradation leads to respiratory complex I degradation and broad reshaping of the mitochondrial proteome by AFG3L2. Also acts as a regulator of mitochondrial glutathione homeostasis by mediating cleavage and degradation of SLC25A39. SLC25A39 cleavage is prevented when SLC25A39 binds iron-sulfur. Involved in the regulation of OMA1-dependent processing of OPA1. May act by mediating processing of OMA1 precursor, participating in OMA1 maturation. The polypeptide is Mitochondrial inner membrane m-AAA protease component AFG3L2 (AFG3L2) (Bos taurus (Bovine)).